Here is a 309-residue protein sequence, read N- to C-terminus: Ribose-phosphate pyrophosphokinase (309 aa).

ATP-binding positions include 37–39 (DGE) and 96–97 (RQ). Residues histidine 130 and aspartate 169 each contribute to the Mg(2+) site. Lysine 192 is a catalytic residue. Residues arginine 194, aspartate 218, and 222–226 (DTAGT) contribute to the D-ribose 5-phosphate site.

The protein belongs to the ribose-phosphate pyrophosphokinase family. Class I subfamily. In terms of assembly, homohexamer. Mg(2+) serves as cofactor.

The protein localises to the cytoplasm. The catalysed reaction is D-ribose 5-phosphate + ATP = 5-phospho-alpha-D-ribose 1-diphosphate + AMP + H(+). It functions in the pathway metabolic intermediate biosynthesis; 5-phospho-alpha-D-ribose 1-diphosphate biosynthesis; 5-phospho-alpha-D-ribose 1-diphosphate from D-ribose 5-phosphate (route I): step 1/1. Its function is as follows. Involved in the biosynthesis of the central metabolite phospho-alpha-D-ribosyl-1-pyrophosphate (PRPP) via the transfer of pyrophosphoryl group from ATP to 1-hydroxyl of ribose-5-phosphate (Rib-5-P). The chain is Ribose-phosphate pyrophosphokinase from Helicobacter hepaticus (strain ATCC 51449 / 3B1).